The sequence spans 245 residues: Exosome complex component RRP41 (245 aa).

Position 2 is an N-acetylalanine (alanine 2).

This sequence belongs to the RNase PH family. Component of the RNA exosome core complex (Exo-9), composed of EXOSC1, EXOSC2, EXOSC3, EXOSC4, EXOSC5, EXOSC6, EXOSC7, EXOSC8 and EXOSC9; within the complex interacts with EXOSC2, EXOSC7 and EXOSC9. The catalytically inactive RNA exosome core complex (Exo-9) associates with the catalytic subunit EXOSC10/RRP6. Exo-9 may associate with DIS3 to form the nucleolar exosome complex, or DIS3L to form the cytoplasmic exosome complex. Exo-9 is formed by a hexameric base ring consisting of the heterodimers EXOSC4-EXOSC9, EXOSC5-EXOSC8 and EXOSC6-EXOSC7, and a cap ring consisting of EXOSC1, EXOSC2 and EXOSC3. The RNA exosome complex associates with cofactors C1D/RRP47, MPHOSPH6/MPP6 and MTREX/MTR4. Interacts with DDX60. Interacts with DIS3; the interaction is direct.

The protein localises to the cytoplasm. Its subcellular location is the nucleus. It is found in the nucleolus. The protein resides in the nucleoplasm. Functionally, non-catalytic component of the RNA exosome complex which has 3'-&gt;5' exoribonuclease activity and participates in a multitude of cellular RNA processing and degradation events. In the nucleus, the RNA exosome complex is involved in proper maturation of stable RNA species such as rRNA, snRNA and snoRNA, in the elimination of RNA processing by-products and non-coding 'pervasive' transcripts, such as antisense RNA species and promoter-upstream transcripts (PROMPTs), and of mRNAs with processing defects, thereby limiting or excluding their export to the cytoplasm. The RNA exosome may be involved in Ig class switch recombination (CSR) and/or Ig variable region somatic hypermutation (SHM) by targeting AICDA deamination activity to transcribed dsDNA substrates. In the cytoplasm, the RNA exosome complex is involved in general mRNA turnover and specifically degrades inherently unstable mRNAs containing AU-rich elements (AREs) within their 3' untranslated regions, and in RNA surveillance pathways, preventing translation of aberrant mRNAs. It seems to be involved in degradation of histone mRNA. The catalytic inactive RNA exosome core complex of 9 subunits (Exo-9) is proposed to play a pivotal role in the binding and presentation of RNA for ribonucleolysis, and to serve as a scaffold for the association with catalytic subunits and accessory proteins or complexes. EXOSC4 binds to ARE-containing RNAs. In Bos taurus (Bovine), this protein is Exosome complex component RRP41 (EXOSC4).